The primary structure comprises 257 residues: BTB/POZ domain-containing protein KCTD1 (257 aa).

Residues 1 to 25 are disordered; sequence MSRPLITRSPASPLNNQGIPTPAQL. 2 positions are modified to phosphoserine: Ser-9 and Ser-12. Positions 9–25 are enriched in polar residues; the sequence is SPASPLNNQGIPTPAQL. One can recognise a BTB domain in the interval 30–100; the sequence is APVHIDVGGH…LRTSKLLIPD (71 aa).

In terms of assembly, forms homopentamers. Interacts with KCTD15, probably forming heteropentamers depending on its abundance in a cell-type dependent manner. Interacts with TFAP2A, TFAP2B and TFAP2C via the BTB domain. Sumoylated. Expressed in mammary gland, kidney, brain and ovary.

The protein resides in the nucleus. In terms of biological role, may repress the transcriptional activity of AP-2 family members, including TFAP2A, TFAP2B and TFAP2C to various extent. The protein is BTB/POZ domain-containing protein KCTD1 (KCTD1) of Homo sapiens (Human).